A 153-amino-acid chain; its full sequence is SKP1-like protein 5 (153 aa).

The interval Met90 to Gln153 is interaction with the F-box domain of F-box proteins.

It belongs to the SKP1 family. Part of a SCF (SKP1-cullin-F-box) protein ligase complex. Interacts with PP2A13. In terms of tissue distribution, restricted to inflorescences, especially in the inflorescence meristem (IM).

It is found in the nucleus. The protein operates within protein modification; protein ubiquitination. Functionally, involved in ubiquitination and subsequent proteasomal degradation of target proteins. Together with CUL1, RBX1 and a F-box protein, it forms a SCF E3 ubiquitin ligase complex. The functional specificity of this complex depends on the type of F-box protein. In the SCF complex, it serves as an adapter that links the F-box protein to CUL1. This Arabidopsis thaliana (Mouse-ear cress) protein is SKP1-like protein 5 (ASK5).